A 267-amino-acid chain; its full sequence is MYFEILGKDTPLAPTLVLSAGLGGAGSFWQPQINALGEHFRVVVYDHFGTARSKGSVPDGYSMADMADEVAQLLRSLNVDCCYFVGHALGGMIGLQLALTHPQLVEKLVVVNGWPTLDSQTRRCFKVRQDLLLNSGVEAYVRAQPLFLFPADWLSQHSALLDEELQHQTAHFQGTENLLRRLTALMNTDFRPHLADITTPTLALCSRDDLLVPYHCSHQLAASLPNGELAEMAYGGHAMSVTDTEHFNRILLGWLLKTQNAQTRLQP.

The AB hydrolase-1 domain occupies 14 to 115 (PTLVLSAGLG…EKLVVVNGWP (102 aa)).

This sequence belongs to the AB hydrolase superfamily. Hydrolase RutD family.

It catalyses the reaction carbamate + 2 H(+) = NH4(+) + CO2. In terms of biological role, involved in pyrimidine catabolism. May facilitate the hydrolysis of carbamate, a reaction that can also occur spontaneously. The chain is Putative carbamate hydrolase RutD from Serratia proteamaculans (strain 568).